The following is a 366-amino-acid chain: Sulfite reductase, dissimilatory-type subunit beta (366 aa).

Cys140, Cys177, Cys178, Cys182, Cys220, Cys241, Cys244, and Cys247 together coordinate [4Fe-4S] cluster. Cys182 is a binding site for siroheme. In terms of domain architecture, 4Fe-4S ferredoxin-type spans Lys232 to Asp262.

In terms of assembly, heterotetramer of two alpha and two beta subunits. [4Fe-4S] cluster serves as cofactor. Siroheme is required as a cofactor.

Its subcellular location is the membrane. It catalyses the reaction [DsrC protein]-trisulfide + NAD(+) + 3 H2O = [DsrC protein]-dithiol + sulfite + NADH + 3 H(+). Catalyzes the reduction of sulfite to sulfide. This is the terminal oxidation reaction in sulfate respiration. This Archaeoglobus fulgidus (strain ATCC 49558 / DSM 4304 / JCM 9628 / NBRC 100126 / VC-16) protein is Sulfite reductase, dissimilatory-type subunit beta (dsrB).